The following is a 193-amino-acid chain: 3-isopropylmalate dehydratase small subunit (193 aa).

Belongs to the LeuD family. LeuD type 1 subfamily. Heterodimer of LeuC and LeuD.

The catalysed reaction is (2R,3S)-3-isopropylmalate = (2S)-2-isopropylmalate. It participates in amino-acid biosynthesis; L-leucine biosynthesis; L-leucine from 3-methyl-2-oxobutanoate: step 2/4. Its function is as follows. Catalyzes the isomerization between 2-isopropylmalate and 3-isopropylmalate, via the formation of 2-isopropylmaleate. In Bacillus cytotoxicus (strain DSM 22905 / CIP 110041 / 391-98 / NVH 391-98), this protein is 3-isopropylmalate dehydratase small subunit.